A 1177-amino-acid chain; its full sequence is DNA-directed RNA polymerase subunit beta (1177 aa).

Residues 1147–1161 (DDTEIEMRDTEDDDD) show a composition bias toward acidic residues. The disordered stretch occupies residues 1147–1177 (DDTEIEMRDTEDDDDHQSADKLNVEVETTKE). The segment covering 1162 to 1177 (HQSADKLNVEVETTKE) has biased composition (basic and acidic residues).

The protein belongs to the RNA polymerase beta chain family. The RNAP catalytic core consists of 2 alpha, 1 beta, 1 beta' and 1 omega subunit. When a sigma factor is associated with the core the holoenzyme is formed, which can initiate transcription.

It carries out the reaction RNA(n) + a ribonucleoside 5'-triphosphate = RNA(n+1) + diphosphate. In terms of biological role, DNA-dependent RNA polymerase catalyzes the transcription of DNA into RNA using the four ribonucleoside triphosphates as substrates. In Bacillus cereus (strain G9842), this protein is DNA-directed RNA polymerase subunit beta.